Consider the following 129-residue polypeptide: C-phycocyanin beta subunit (129 aa).

Asn-62 is subject to N4-methylasparagine. Position 116 (Cys-116) interacts with (2R,3E)-phycocyanobilin.

This sequence belongs to the phycobiliprotein family. As to quaternary structure, heterodimer of an alpha and a beta subunit, which further assembles into trimers and the trimers into hexamers. Post-translationally, two isomers exist. Contains two covalently linked bilin chromophores.

It localises to the cellular thylakoid membrane. Its function is as follows. Light-harvesting photosynthetic bile pigment-protein from the phycobiliprotein complex (phycobilisome, PBS). Phycocyanin is the major phycobiliprotein in the PBS rod. The chain is C-phycocyanin beta subunit from Aphanizomenon flos-aquae.